A 67-amino-acid chain; its full sequence is Cold shock-like protein CspE (67 aa).

A CSD domain is found at 5–64 (GKVKWFNSEKGFGFIEVEGGNDVFVHFSAITGDGFKSLDEGQEVSFEVEDGNRGPQAKNV).

Homodimer.

It localises to the cytoplasm. Functionally, can bind to ATTGG and CCAAT motifs (Y-box motifs) of single-stranded oligonucleotides. The protein is Cold shock-like protein CspE (cspE) of Bacillus anthracis.